Reading from the N-terminus, the 554-residue chain is Sesquiterpene synthase 14a (554 aa).

Positions 305, 309, 449, and 457 each coordinate Mg(2+). Residues 305–309 (DDLYD) carry the DDXXD motif motif.

Belongs to the terpene synthase family. Tpsa subfamily. The cofactor is Mg(2+). Mn(2+) is required as a cofactor. Mostly expressed in stem trichomes.

It carries out the reaction (2E,6E)-farnesyl diphosphate = beta-bisabolene + diphosphate. It catalyses the reaction (2E,6E)-farnesyl diphosphate = (Z)-alpha-bisabolene + diphosphate. The catalysed reaction is (2E,6E)-farnesyl diphosphate = beta-acoradiene + diphosphate. The enzyme catalyses (2E,6E)-farnesyl diphosphate = (E)-gamma-bisabolene + diphosphate. It carries out the reaction (2E,6E)-farnesyl diphosphate = (E)-beta-farnesene + diphosphate. It catalyses the reaction (2E,6E)-farnesyl diphosphate = (Z)-beta-farnesene + diphosphate. The catalysed reaction is (2E)-geranyl diphosphate = limonene + diphosphate. The enzyme catalyses (2E)-geranyl diphosphate = beta-myrcene + diphosphate. The protein operates within secondary metabolite biosynthesis; terpenoid biosynthesis. In terms of biological role, sesquiterpene synthase involved in the biosynthesis of volatile compounds. Mediates the conversion of (2E,6E)-farnesyl diphosphate ((EE)-FPP) into beta-bisabolene, beta-farnesene, (E)-gamma-bisabolene, beta-acoradiene, selinene and (Z)-alpha-bisabolene. Low or no activity with (2Z,6Z)-farnesyl diphosphate ((ZZ)-FPP). Can act with a low efficiency as a monoterpene synthase with geranyl diphosphate (GPP) as substrate, thus producing beta-myrcene and limonene. The polypeptide is Sesquiterpene synthase 14a (Solanum habrochaites (Wild tomato)).